Consider the following 143-residue polypeptide: Nucleoside diphosphate kinase (143 aa).

Residues K11, F59, R87, T93, R104, and N114 each contribute to the ATP site. Catalysis depends on H117, which acts as the Pros-phosphohistidine intermediate.

The protein belongs to the NDK family. As to quaternary structure, homotetramer. It depends on Mg(2+) as a cofactor.

Its subcellular location is the cytoplasm. The catalysed reaction is a 2'-deoxyribonucleoside 5'-diphosphate + ATP = a 2'-deoxyribonucleoside 5'-triphosphate + ADP. The enzyme catalyses a ribonucleoside 5'-diphosphate + ATP = a ribonucleoside 5'-triphosphate + ADP. Major role in the synthesis of nucleoside triphosphates other than ATP. The ATP gamma phosphate is transferred to the NDP beta phosphate via a ping-pong mechanism, using a phosphorylated active-site intermediate. The protein is Nucleoside diphosphate kinase of Alcanivorax borkumensis (strain ATCC 700651 / DSM 11573 / NCIMB 13689 / SK2).